Here is a 374-residue protein sequence, read N- to C-terminus: Alanine racemase (374 aa).

Lysine 35 (proton acceptor; specific for D-alanine) is an active-site residue. Lysine 35 is subject to N6-(pyridoxal phosphate)lysine. Residue arginine 130 coordinates substrate. The active-site Proton acceptor; specific for L-alanine is the tyrosine 253. Residue methionine 305 coordinates substrate.

It belongs to the alanine racemase family. Pyridoxal 5'-phosphate is required as a cofactor.

It catalyses the reaction L-alanine = D-alanine. It functions in the pathway amino-acid biosynthesis; D-alanine biosynthesis; D-alanine from L-alanine: step 1/1. Functionally, catalyzes the interconversion of L-alanine and D-alanine. May also act on other amino acids. In Ralstonia pickettii (strain 12J), this protein is Alanine racemase (alr).